The primary structure comprises 134 residues: kinetoplast-associated protein 3 (134 aa).

The propeptide occupies 1–10 (MLRRSPTLLR). Residues 106–124 (PKAPKAAKSASSKVKTAAK) show a composition bias toward low complexity. The interval 106–134 (PKAPKAAKSASSKVKTAAKTAKKTTAARK) is disordered. Residues 125–134 (TAKKTTAARK) show a composition bias toward basic residues.

Belongs to the KAP family. Associates with the kinetoplast DNA network.

It is found in the mitochondrion matrix. It localises to the kinetoplast. Histone H1-like DNA-binding protein involved in the organization and segregation of kinetoplast DNA (kDNA). The mitochondrial DNA of kinetoplastid protozoa consists of about 5,000 minicircles and 20 to 30 maxicircles. These circular DNAs are held together by catenation into a highly organized compact disk structure referred to as a kinetoplast DNA (kDNA) network. Binds preferentially to a specific fragment of minicircle DNA and is able to compact kDNA networks through DNA charge neutralization and condensation. In Crithidia fasciculata, this protein is kinetoplast-associated protein 3 (KAP3).